Reading from the N-terminus, the 351-residue chain is Protein arginine N-methyltransferase 1-B (351 aa).

Positions 30–331 constitute an SAM-dependent MTase PRMT-type domain; it reads KDYYFDSYAH…KNNRDLDFTV (302 aa). S-adenosyl-L-methionine-binding residues include histidine 43, arginine 52, glycine 76, glutamate 98, and glutamate 127. Catalysis depends on residues glutamate 142 and glutamate 151.

This sequence belongs to the class I-like SAM-binding methyltransferase superfamily. Protein arginine N-methyltransferase family. Homodimer. Homooctamer; individual homodimers associates to form a homooctamer and homooligomerization is required for proper localization to the cell membrane. Individual homodimers can associate to form a homohexamer. Component of a complex with lsm14a/rap55a. Interacts with cirbp. In terms of tissue distribution, from the onset of gastrulation, expressed in dorsal mesoderm, and in dorsal and ventral ectoderm. At the neurula and tail bud stages, expression is restricted to the neuroectoderm, with highest expression in the anterior neural plate.

The protein localises to the nucleus. The protein resides in the nucleoplasm. Its subcellular location is the cytoplasm. It localises to the cytosol. It carries out the reaction L-arginyl-[protein] + 2 S-adenosyl-L-methionine = N(omega),N(omega)-dimethyl-L-arginyl-[protein] + 2 S-adenosyl-L-homocysteine + 2 H(+). The catalysed reaction is L-arginyl-[protein] + S-adenosyl-L-methionine = N(omega)-methyl-L-arginyl-[protein] + S-adenosyl-L-homocysteine + H(+). The enzyme catalyses N(omega)-methyl-L-arginyl-[protein] + S-adenosyl-L-methionine = N(omega),N(omega)-dimethyl-L-arginyl-[protein] + S-adenosyl-L-homocysteine + H(+). Arginine methyltransferase that methylates (mono and asymmetric dimethylation) the guanidino nitrogens of arginyl residues present in target proteins. Constitutes the main enzyme that mediates monomethylation and asymmetric dimethylation of histone H4 'Arg-4' (H4R3me1 and H4R3me2a, respectively), a specific tag for epigenetic transcriptional activation. Methylates ilf3 to regulate its DNA-binding activity. Required for neural induction, playing a key role in the control of epidermal versus neural cell fate choice. This Xenopus laevis (African clawed frog) protein is Protein arginine N-methyltransferase 1-B (prmt1-b).